We begin with the raw amino-acid sequence, 467 residues long: Mitogen-activated protein kinase kinase kinase 8 (467 aa).

At Thr-80 the chain carries Phosphothreonine. Ser-138 and Ser-141 each carry phosphoserine. Residues 144 to 152 (VPRGAFGKV) and Lys-167 contribute to the ATP site. The Protein kinase domain maps to 146–388 (RGAFGKVYLA…AADLLKHEAL (243 aa)). Asp-253 functions as the Proton acceptor in the catalytic mechanism. Thr-290 carries the post-translational modification Phosphothreonine. Residues Ser-400 and Ser-443 each carry the phosphoserine modification.

Belongs to the protein kinase superfamily. STE Ser/Thr protein kinase family. MAP kinase kinase kinase subfamily. Forms a ternary complex with NFKB1/p105 and TNIP2. Interacts with NFKB1; the interaction increases the stability of MAP3K8 but inhibits its MEK phosphorylation activity, whereas loss of interaction following LPS stimulation leads to its degradation. Interacts with CD40 and TRAF6; the interaction is required for ERK activation. Interacts with KSR2; the interaction inhibits ERK and NF-kappa-B activation. Mg(2+) is required as a cofactor. Post-translationally, autophosphorylated. In terms of tissue distribution, expressed in spleen, thymus, liver and lung.

It localises to the cytoplasm. The catalysed reaction is L-seryl-[protein] + ATP = O-phospho-L-seryl-[protein] + ADP + H(+). The enzyme catalyses L-threonyl-[protein] + ATP = O-phospho-L-threonyl-[protein] + ADP + H(+). Functionally, required for lipopolysaccharide (LPS)-induced, TLR4-mediated activation of the MAPK/ERK pathway in macrophages, thus being critical for production of the pro-inflammatory cytokine TNF-alpha (TNF) during immune responses. Involved in the regulation of T-helper cell differentiation and IFNG expression in T-cells. Involved in mediating host resistance to bacterial infection through negative regulation of type I interferon (IFN) production. Transduces CD40 and TNFRSF1A signals that activate ERK in B-cells and macrophages, and thus may play a role in the regulation of immunoglobulin production. May also play a role in the transduction of TNF signals that activate JNK and NF-kappa-B in some cell types. In adipocytes, activates MAPK/ERK pathway in an IKBKB-dependent manner in response to IL1B and TNF, but not insulin, leading to induction of lipolysis. Plays a role in the cell cycle. In Rattus norvegicus (Rat), this protein is Mitogen-activated protein kinase kinase kinase 8 (Map3k8).